A 208-amino-acid chain; its full sequence is Small ribosomal subunit protein uS4 (208 aa).

Residues 97 to 158 (TRLDNVIYRM…RAQKYLCVQE (62 aa)) form the S4 RNA-binding domain.

It belongs to the universal ribosomal protein uS4 family. In terms of assembly, part of the 30S ribosomal subunit. Contacts protein S5. The interaction surface between S4 and S5 is involved in control of translational fidelity.

In terms of biological role, one of the primary rRNA binding proteins, it binds directly to 16S rRNA where it nucleates assembly of the body of the 30S subunit. With S5 and S12 plays an important role in translational accuracy. This is Small ribosomal subunit protein uS4 from Xylella fastidiosa (strain 9a5c).